We begin with the raw amino-acid sequence, 1547 residues long: ABC multidrug transporter atrF (1547 aa).

Disordered stretches follow at residues M1–A66 and T85–D123. The segment covering S10–N19 has biased composition (polar residues). Positions S36–S47 are enriched in low complexity. The span at R51 to A66 shows a compositional bias: basic and acidic residues. Positions K111 to D123 are enriched in acidic residues. The region spanning I197–E439 is the ABC transporter 1 domain. N299 and N363 each carry an N-linked (GlcNAc...) asparagine glycan. 7 helical membrane-spanning segments follow: residues L552–G572, A586–V606, F635–L655, V657–T677, G698–I718, I722–T742, and F804–F824. The ABC transporter 2 domain occupies F892–G1130. N905 carries N-linked (GlcNAc...) asparagine glycosylation. ATP is bound at residue G928–T935. Residues N980 and N999 are each glycosylated (N-linked (GlcNAc...) asparagine). 8 helical membrane-spanning segments follow: residues F1230–I1250, I1260–I1280, I1309–F1329, S1334–G1354, W1356–V1376, Y1397–F1417, C1491–Y1511, and F1520–F1540.

It belongs to the ABC transporter superfamily. ABCG family. PDR (TC 3.A.1.205) subfamily.

It is found in the cell membrane. It catalyses the reaction voriconazole(in) + ATP + H2O = voriconazole(out) + ADP + phosphate + H(+). The enzyme catalyses fluconazole(in) + ATP + H2O = fluconazole(out) + ADP + phosphate + H(+). Functionally, pleiotropic ABC efflux transporter involved in the basal level of azole susceptibility. Confers resistance to fluconazole and voriconazole. The chain is ABC multidrug transporter atrF from Aspergillus fumigatus (strain ATCC MYA-4609 / CBS 101355 / FGSC A1100 / Af293) (Neosartorya fumigata).